We begin with the raw amino-acid sequence, 96 residues long: Small ribosomal subunit protein bS6 (96 aa).

It belongs to the bacterial ribosomal protein bS6 family.

Binds together with bS18 to 16S ribosomal RNA. The chain is Small ribosomal subunit protein bS6 from Bacillus mycoides (strain KBAB4) (Bacillus weihenstephanensis).